Here is a 164-residue protein sequence, read N- to C-terminus: Interleukin-10 (164 aa).

An N-terminal signal peptide occupies residues 1–18 (MPSSALLCCLIFLARVAA). Disulfide bonds link cysteine 30–cysteine 126 and cysteine 80–cysteine 132. An N-linked (GlcNAc...) asparagine glycan is attached at asparagine 134.

The protein belongs to the IL-10 family. As to quaternary structure, homodimer. Interacts with IL10RA and IL10RB.

Its subcellular location is the secreted. Functionally, major immune regulatory cytokine that acts on many cells of the immune system where it has profound anti-inflammatory functions, limiting excessive tissue disruption caused by inflammation. Mechanistically, IL10 binds to its heterotetrameric receptor comprising IL10RA and IL10RB leading to JAK1 and STAT2-mediated phosphorylation of STAT3. In turn, STAT3 translocates to the nucleus where it drives expression of anti-inflammatory mediators. Targets antigen-presenting cells (APCs) such as macrophages and monocytes and inhibits their release of pro-inflammatory cytokines including granulocyte-macrophage colony-stimulating factor /GM-CSF, granulocyte colony-stimulating factor/G-CSF, IL-1 alpha, IL-1 beta, IL-6, IL-8 and TNF-alpha. Also interferes with antigen presentation by reducing the expression of MHC-class II and co-stimulatory molecules, thereby inhibiting their ability to induce T cell activation. In addition, controls the inflammatory response of macrophages by reprogramming essential metabolic pathways including mTOR signaling. The sequence is that of Interleukin-10 (IL10) from Orcinus orca (Killer whale).